The following is a 661-amino-acid chain: Heme transporter BhuA (661 aa).

A signal peptide spans 1 to 23 (MKFTRTLVLASTFLLATVATSQA). The TBDR plug domain occupies 48-159 (KDNIEATGGT…AAGAIRYETV (112 aa)). The region spanning 170–661 (TFGARIIGSY…TFTFQTAFKF (492 aa)) is the TBDR beta-barrel domain.

This sequence belongs to the TonB-dependent receptor family.

The protein localises to the cell outer membrane. Its function is as follows. Heme transporter. The protein is Heme transporter BhuA (bhuA) of Brucella suis biovar 1 (strain 1330).